We begin with the raw amino-acid sequence, 335 residues long: Acetyl-coenzyme A carboxylase carboxyl transferase subunit alpha (335 aa).

The CoA carboxyltransferase C-terminal domain occupies 40-294 (QLETLATRRR…KGAIEKHLNE (255 aa)).

It belongs to the AccA family. In terms of assembly, acetyl-CoA carboxylase is a heterohexamer composed of biotin carboxyl carrier protein (AccB), biotin carboxylase (AccC) and two subunits each of ACCase subunit alpha (AccA) and ACCase subunit beta (AccD).

Its subcellular location is the cytoplasm. The enzyme catalyses N(6)-carboxybiotinyl-L-lysyl-[protein] + acetyl-CoA = N(6)-biotinyl-L-lysyl-[protein] + malonyl-CoA. It participates in lipid metabolism; malonyl-CoA biosynthesis; malonyl-CoA from acetyl-CoA: step 1/1. Component of the acetyl coenzyme A carboxylase (ACC) complex. First, biotin carboxylase catalyzes the carboxylation of biotin on its carrier protein (BCCP) and then the CO(2) group is transferred by the carboxyltransferase to acetyl-CoA to form malonyl-CoA. The chain is Acetyl-coenzyme A carboxylase carboxyl transferase subunit alpha from Prochlorococcus marinus subsp. pastoris (strain CCMP1986 / NIES-2087 / MED4).